The chain runs to 214 residues: Phosphatidylserine decarboxylase proenzyme (214 aa).

Residue S182 is the Schiff-base intermediate with substrate; via pyruvic acid of the active site. At S182 the chain carries Pyruvic acid (Ser); by autocatalysis.

This sequence belongs to the phosphatidylserine decarboxylase family. PSD-A subfamily. As to quaternary structure, heterodimer of a large membrane-associated beta subunit and a small pyruvoyl-containing alpha subunit. The cofactor is pyruvate. Post-translationally, is synthesized initially as an inactive proenzyme. Formation of the active enzyme involves a self-maturation process in which the active site pyruvoyl group is generated from an internal serine residue via an autocatalytic post-translational modification. Two non-identical subunits are generated from the proenzyme in this reaction, and the pyruvate is formed at the N-terminus of the alpha chain, which is derived from the carboxyl end of the proenzyme. The post-translation cleavage follows an unusual pathway, termed non-hydrolytic serinolysis, in which the side chain hydroxyl group of the serine supplies its oxygen atom to form the C-terminus of the beta chain, while the remainder of the serine residue undergoes an oxidative deamination to produce ammonia and the pyruvoyl prosthetic group on the alpha chain.

It is found in the cell membrane. It carries out the reaction a 1,2-diacyl-sn-glycero-3-phospho-L-serine + H(+) = a 1,2-diacyl-sn-glycero-3-phosphoethanolamine + CO2. Its pathway is phospholipid metabolism; phosphatidylethanolamine biosynthesis; phosphatidylethanolamine from CDP-diacylglycerol: step 2/2. Catalyzes the formation of phosphatidylethanolamine (PtdEtn) from phosphatidylserine (PtdSer). This chain is Phosphatidylserine decarboxylase proenzyme, found in Burkholderia ambifaria (strain MC40-6).